The chain runs to 2517 residues: Serine/threonine-protein kinase ATR (2517 aa).

Residues 1178-1214 (EPMLEQIVNVLMAGCQHDDSQLQMASAKCLGELGAID) form an HEAT repeat. In terms of domain architecture, FAT spans 1509–2066 (LVSRASYNCG…LWMLLPHFKS (558 aa)). Serine 1569 bears the Phosphoserine mark. A Phosphotyrosine modification is found at tyrosine 1570. Serine 1573 is subject to Phosphoserine. Threonine 1575 carries the post-translational modification Phosphothreonine. In terms of domain architecture, PI3K/PI4K catalytic spans 2184 to 2508 (FQESVLILRS…EATKVDNLAS (325 aa)). The segment at 2190 to 2196 (ILRSAAK) is G-loop. The catalytic loop stretch occupies residues 2360 to 2368 (GLGDRHGEN). Residues 2380-2404 (HVDFNCLFNQGELLPYPEVVPFRLT) are activation loop. The FATC domain occupies 2485–2517 (IPLSTEGQVNFLINEATKVDNLASMYIGWGAFL).

This sequence belongs to the PI3/PI4-kinase family. ATM subfamily. In terms of assembly, interacts with mus304. Mn(2+) serves as cofactor.

The protein localises to the nucleus. It catalyses the reaction L-seryl-[protein] + ATP = O-phospho-L-seryl-[protein] + ADP + H(+). The enzyme catalyses L-threonyl-[protein] + ATP = O-phospho-L-threonyl-[protein] + ADP + H(+). Its function is as follows. Serine/threonine protein kinase which activates checkpoint signaling upon genotoxic stresses such as ionizing radiation (IR), ultraviolet light (UV), or DNA replication stalling, thereby acting as a DNA damage sensor. Recognizes the substrate consensus sequence [ST]-Q. Phosphorylates various proteins, which collectively inhibits DNA replication and mitosis and promotes DNA repair and recombination. Phosphorylates grp/CHK1. Phosphorylates 'Ser-137' of histone variant H2AX/H2AV at sites of DNA damage, thereby regulating DNA damage response mechanism. Essential for the DNA damage checkpoint in larval imaginal disks and neuroblasts and for the DNA replication checkpoint in the embryo. Also has an essential role during early nuclear divisions in embryos, where it is required to delay mitosis in response to incomplete DNA replication. Also plays an important role during meiosis, where it may monitor double-strand-break repair during meiotic crossing over, to regulate the progression of prophase I, and to enforce metaphase I delay observed at the end of oogenesis. Involved in telomere maintenance and prevention of telomere fusion; potentially functioning downstream of moi/modigliani. This chain is Serine/threonine-protein kinase ATR (mei-41), found in Drosophila melanogaster (Fruit fly).